The sequence spans 219 residues: Phosphate-specific transport system accessory protein PhoU homolog 1 (219 aa).

It belongs to the PhoU family. As to quaternary structure, homodimer.

The protein resides in the cytoplasm. Functionally, plays a role in the regulation of phosphate uptake. The sequence is that of Phosphate-specific transport system accessory protein PhoU homolog 1 from Methanothermobacter thermautotrophicus (strain ATCC 29096 / DSM 1053 / JCM 10044 / NBRC 100330 / Delta H) (Methanobacterium thermoautotrophicum).